The primary structure comprises 235 residues: Large ribosomal subunit protein uL1 (235 aa).

This sequence belongs to the universal ribosomal protein uL1 family. Part of the 50S ribosomal subunit.

Binds directly to 23S rRNA. The L1 stalk is quite mobile in the ribosome, and is involved in E site tRNA release. In terms of biological role, protein L1 is also a translational repressor protein, it controls the translation of the L11 operon by binding to its mRNA. The polypeptide is Large ribosomal subunit protein uL1 (Symbiobacterium thermophilum (strain DSM 24528 / JCM 14929 / IAM 14863 / T)).